The chain runs to 259 residues: MKLGVNIDHIATIRNARQINEPDPLMALQILKEAGADQVTIHLREDRRHITDFDAGRICQNSFLPVNMECSINPEIIDIICSLKPHRATLVPEKREEVTTEGGLDIIKFEKEIKNAIEKLHNNDIEVSLFIDPDFEQITKSAEVGAEMIELHTGKYANLHLALNTNINSTPFKVFENMDRKTLKKELELELKLLKDATILGNELGLEVAAGHGLNYQNVKPVADIEGIVELNIGHSIIANSVFLGLKQAIIQMRELING.

N6 contacts 3-amino-2-oxopropyl phosphate. 1-deoxy-D-xylulose 5-phosphate is bound at residue D8–H9. R17 serves as a coordination point for 3-amino-2-oxopropyl phosphate. Residue H42 is the Proton acceptor of the active site. 1-deoxy-D-xylulose 5-phosphate-binding residues include R44 and H49. E69 functions as the Proton acceptor in the catalytic mechanism. T99 is a binding site for 1-deoxy-D-xylulose 5-phosphate. The active-site Proton donor is the H212. Residues G213 and G234–H235 contribute to the 3-amino-2-oxopropyl phosphate site.

This sequence belongs to the PNP synthase family. In terms of assembly, homooctamer; tetramer of dimers.

It is found in the cytoplasm. The catalysed reaction is 3-amino-2-oxopropyl phosphate + 1-deoxy-D-xylulose 5-phosphate = pyridoxine 5'-phosphate + phosphate + 2 H2O + H(+). It functions in the pathway cofactor biosynthesis; pyridoxine 5'-phosphate biosynthesis; pyridoxine 5'-phosphate from D-erythrose 4-phosphate: step 5/5. In terms of biological role, catalyzes the complicated ring closure reaction between the two acyclic compounds 1-deoxy-D-xylulose-5-phosphate (DXP) and 3-amino-2-oxopropyl phosphate (1-amino-acetone-3-phosphate or AAP) to form pyridoxine 5'-phosphate (PNP) and inorganic phosphate. This is Pyridoxine 5'-phosphate synthase from Nautilia profundicola (strain ATCC BAA-1463 / DSM 18972 / AmH).